Here is a 778-residue protein sequence, read N- to C-terminus: MAAAGLVAVVAAAEYSGPVASGGNLSGATCGPSPGLGPGPGPGSWSRSVDRALEEAAVTGVLSLSGRKLREFPRGAANHDLTDTTRADLSRNRLSEIPMEACHFVSLESLNLYQNCIRYIPEAVLNLQALTFLNISRNQLSTLPVHLCNLPLKVLIASNNKLVSLPEEIGHLRHLTELDVSCNEIQTVPSQIGNLEALRDFNVRRNHLLRLPEELAEVPLIRLDFSCNKITVIPVCYRNLRHLQVITLDNNPLQSPPAQICIKGKIHIFKYLNIQACKIAPDLPDYERRPLGFGSCHEELYSGRPYGALDSGFNSVDSGDKRWSGNEPTDEFSDLPLRVAEITKEQRLRRESQYQENRSSVAVTNGGVEHDLDQIDYIDSCTTEEEENDVKQPKSLDTNSLSSQFMAYIEQRRISHEVSPVKPIAVREFQKTEDMKRYSHQNRVPVEPSLVLSMPPSHNQLSHSDLELHQRREQSIECTRREAQLAALQYEEEKIRTKQIQRDAVLDFVKQKASHNPQRQQPPGNGECSFPSRRSQHTDDSALLVSLSGLDGVSCVATRPHSSAFTPLKSENRVDVTSSFPMTETVHHSPAYSFPAATQRNQPQRPESFLFRAAVRAEANKGRASPLLLSSAPATDPTDAITRQREEELKLIDQLRKHIEYRLKVSLPCDLGAALTDGVVLCHLANHVRPRSVPSIHVPSPAVPKLTMAKCRRNVENFLDACRKIGVPQEQLCLPLHILEEKGLGQVAVTVQALLELAPPKQPPPQQPQQQQPQLSAV.

10 LRR repeats span residues 56–79 (AAVT…AANH), 81–104 (LTDT…ACHF), 105–127 (VSLE…VLNL), 128–150 (QALT…LCNL), 152–172 (LKVL…IGHL), 173–195 (RHLT…IGNL), 197–218 (ALRD…LAEV), 220–239 (LIRL…CYRN), 240–264 (LRHL…CIKG), and 266–290 (IHIF…ERRP). Residues 56–290 (AAVTGVLSLS…PDLPDYERRP (235 aa)) form a mediates interaction with DOCK7 region. Phosphoserine is present on residues S324, S415, and S419. The mediates direct interaction with MYO6 stretch occupies residues 382 to 642 (TTEEEENDVK…PATDPTDAIT (261 aa)). Residues 511 to 536 (QKASHNPQRQQPPGNGECSFPSRRSQ) form a disordered region. A compositionally biased stretch (polar residues) spans 514-523 (SHNPQRQQPP). S608 and S625 each carry phosphoserine. The region spanning 645-758 (REEELKLIDQ…VTVQALLELA (114 aa)) is the Calponin-homology (CH) domain. Positions 758 to 778 (APPKQPPPQQPQQQQPQLSAV) are disordered. Low complexity predominate over residues 768–778 (PQQQQPQLSAV).

In terms of assembly, component of the DOCK7-induced septin displacement/DISP complex, at least composed of DOCK7, LRCH3 and MYO6.

It is found in the cytoplasm. Functionally, as part of the DISP complex, may regulate the association of septins with actin and thereby regulate the actin cytoskeleton. In Mus musculus (Mouse), this protein is DISP complex protein LRCH3.